Here is a 96-residue protein sequence, read N- to C-terminus: Co-chaperonin GroES (96 aa).

Belongs to the GroES chaperonin family. In terms of assembly, heptamer of 7 subunits arranged in a ring. Interacts with the chaperonin GroEL.

Its subcellular location is the cytoplasm. In terms of biological role, together with the chaperonin GroEL, plays an essential role in assisting protein folding. The GroEL-GroES system forms a nano-cage that allows encapsulation of the non-native substrate proteins and provides a physical environment optimized to promote and accelerate protein folding. GroES binds to the apical surface of the GroEL ring, thereby capping the opening of the GroEL channel. The chain is Co-chaperonin GroES from Polynucleobacter necessarius subsp. necessarius (strain STIR1).